Reading from the N-terminus, the 130-residue chain is Small ribosomal subunit protein uS8 (130 aa).

Belongs to the universal ribosomal protein uS8 family. Part of the 30S ribosomal subunit.

One of the primary rRNA binding proteins, it binds directly to 16S rRNA central domain where it helps coordinate assembly of the platform of the 30S subunit. The protein is Small ribosomal subunit protein uS8 of Methanococcus aeolicus (strain ATCC BAA-1280 / DSM 17508 / OCM 812 / Nankai-3).